A 429-amino-acid polypeptide reads, in one-letter code: Ribosomal RNA small subunit methyltransferase B (429 aa).

S-adenosyl-L-methionine is bound by residues 254–260 (CAAPGGK), aspartate 277, aspartate 303, and aspartate 322. Cysteine 375 (nucleophile) is an active-site residue.

The protein belongs to the class I-like SAM-binding methyltransferase superfamily. RsmB/NOP family.

The protein localises to the cytoplasm. It catalyses the reaction cytidine(967) in 16S rRNA + S-adenosyl-L-methionine = 5-methylcytidine(967) in 16S rRNA + S-adenosyl-L-homocysteine + H(+). Specifically methylates the cytosine at position 967 (m5C967) of 16S rRNA. This chain is Ribosomal RNA small subunit methyltransferase B, found in Escherichia fergusonii (strain ATCC 35469 / DSM 13698 / CCUG 18766 / IAM 14443 / JCM 21226 / LMG 7866 / NBRC 102419 / NCTC 12128 / CDC 0568-73).